The following is a 172-amino-acid chain: Ribosome maturation factor RimM (172 aa).

The 76-residue stretch at 92 to 167 (ENEFYHSDLV…VILKLPEIIG (76 aa)) folds into the PRC barrel domain.

The protein belongs to the RimM family. In terms of assembly, binds ribosomal protein uS19.

The protein localises to the cytoplasm. An accessory protein needed during the final step in the assembly of 30S ribosomal subunit, possibly for assembly of the head region. Essential for efficient processing of 16S rRNA. May be needed both before and after RbfA during the maturation of 16S rRNA. It has affinity for free ribosomal 30S subunits but not for 70S ribosomes. This chain is Ribosome maturation factor RimM, found in Ehrlichia ruminantium (strain Gardel).